Reading from the N-terminus, the 590-residue chain is Dystrobrevin-1 (590 aa).

Over residues M1–P10 the composition is skewed to gly residues. The interval M1–M25 is disordered. Residues Y259–S315 form a ZZ-type zinc finger. Residues C264, C267, C279, C282, C288, C291, H301, and H305 each contribute to the Zn(2+) site. Positions S434–G508 form a coiled coil. The tract at residues D468–F590 is essential for interaction with ctn-1. The segment at M484–R490 is essential for interaction with dys-1.

Belongs to the dystrophin family. Dystrobrevin subfamily. Component of the dystrophin glycoprotein complex (DGC). Interacts with dystrophin (dys-1) and syntrophin (stn-1) to form the DGC. Interacts (via C-terminus) with ctn-1 (via N-terminus); the interaction is required for localization of the dystrophin complex and ctn-1 near dense bodies in muscle cells. As to expression, from late embryogenesis to adulthood, expressed in neurons and muscles; particularly strong in the ventral nerve cord and in muscles of the body wall, head pharyngeal, and vulva; weaker in the intestinal muscle (at protein level).

Its subcellular location is the cytoplasm. In terms of biological role, plays a role in cholinergic transmission and as a functional partner of dystrophin (dys-1), necessary for muscle maintenance. Required for localization of ctn-1 near dense bodies in muscle cells. The chain is Dystrobrevin-1 from Caenorhabditis elegans.